The following is a 179-amino-acid chain: Guanosine-3',5'-bis(diphosphate) 3'-pyrophosphohydrolase MESH1 (179 aa).

Glycine 2 bears the N-acetylglycine mark. The residue at position 25 (lysine 25) is an N6-acetyllysine. One can recognise an HD domain in the interval 32-127 (YINHPIGVAR…VKLADKLYNL (96 aa)). 3 residues coordinate Mn(2+): histidine 35, histidine 61, and aspartate 62. Catalysis depends on nucleophile residues glutamate 65 and aspartate 66. Lysine 97 is modified (N6-acetyllysine). Residue aspartate 122 participates in Mn(2+) binding. An N6-acetyllysine modification is found at lysine 123.

The protein belongs to the MESH1 family. The cofactor is Mn(2+).

The catalysed reaction is guanosine 3',5'-bis(diphosphate) + H2O = GDP + diphosphate + H(+). Functionally, ppGpp hydrolyzing enzyme involved in starvation response. This is Guanosine-3',5'-bis(diphosphate) 3'-pyrophosphohydrolase MESH1 (Hddc3) from Mus musculus (Mouse).